A 416-amino-acid chain; its full sequence is Gamma-glutamyl phosphate reductase (416 aa).

Belongs to the gamma-glutamyl phosphate reductase family.

The protein resides in the cytoplasm. It carries out the reaction L-glutamate 5-semialdehyde + phosphate + NADP(+) = L-glutamyl 5-phosphate + NADPH + H(+). It functions in the pathway amino-acid biosynthesis; L-proline biosynthesis; L-glutamate 5-semialdehyde from L-glutamate: step 2/2. In terms of biological role, catalyzes the NADPH-dependent reduction of L-glutamate 5-phosphate into L-glutamate 5-semialdehyde and phosphate. The product spontaneously undergoes cyclization to form 1-pyrroline-5-carboxylate. In Salmonella newport (strain SL254), this protein is Gamma-glutamyl phosphate reductase.